The chain runs to 576 residues: MNIQALLSDKVSQALIAAGAPADCEAQVRQSAKAQFGDYQANGVMAVAKKLGMQPRQLAERVVELLDLTGIASKIEIAGPGFINIFLDRQWVAEKVEYALTAPKLGVAPVEPQTIVVDYSAPNVAKQMHVGHLRSTIIGDAAVRTLAFLGHNVIRANHVGDWGTQFGMLIAYLEKMQNENASDMGLSDLELFYQQAKKTYDEDEEFALRARAYVVKLQSGDEYCRQMWRKLVDITMAQNQVAYDRLNVTLTKDDVMGESLYNAMLPEIVADLKAKGLAVESEGATVVYLDEYKNKDGEPMGVIIQKKDGGYLYTTTDIACAKYRYETLGADRILYYIDSRQHQHLMQAWTIVRKAGYVPESVPLEHHMFGMMLGKDGKPFKTRSGGTVKLSDLLDEAVERAGKLIAEKNPDMPADELKQVINAVGIGAVKYADLSKSRTTDYIFDWDNMLALDGNTAPYMQYAYTRVVSVFRRAGVDETSLTLPLVVTEDREATLATRLLQFEEIITTVAREGTPHVMCSYLYDLAGLFSSFYEHCQILNAESEEIRQSRLKLAMLTAKTLKQGLDTLGIQTVERM.

A 'HIGH' region motif is present at residues 122 to 132; that stretch reads PNVAKQMHVGH.

This sequence belongs to the class-I aminoacyl-tRNA synthetase family. As to quaternary structure, monomer.

Its subcellular location is the cytoplasm. The catalysed reaction is tRNA(Arg) + L-arginine + ATP = L-arginyl-tRNA(Arg) + AMP + diphosphate. This Yersinia pestis bv. Antiqua (strain Antiqua) protein is Arginine--tRNA ligase.